The chain runs to 378 residues: D-alanine--D-alanine ligase (378 aa).

In terms of domain architecture, ATP-grasp spans Lys-141 to Gln-347. Ala-171–Val-226 contacts ATP. Residues Asp-301, Glu-314, and Asn-316 each coordinate Mg(2+).

Belongs to the D-alanine--D-alanine ligase family. Requires Mg(2+) as cofactor. It depends on Mn(2+) as a cofactor.

Its subcellular location is the cytoplasm. The catalysed reaction is 2 D-alanine + ATP = D-alanyl-D-alanine + ADP + phosphate + H(+). Its pathway is cell wall biogenesis; peptidoglycan biosynthesis. Cell wall formation. In Ligilactobacillus salivarius (strain UCC118) (Lactobacillus salivarius), this protein is D-alanine--D-alanine ligase.